The sequence spans 1358 residues: DNA-directed RNA polymerase subunit beta (1358 aa).

It belongs to the RNA polymerase beta chain family. As to quaternary structure, the RNAP catalytic core consists of 2 alpha, 1 beta, 1 beta' and 1 omega subunit. When a sigma factor is associated with the core the holoenzyme is formed, which can initiate transcription.

The enzyme catalyses RNA(n) + a ribonucleoside 5'-triphosphate = RNA(n+1) + diphosphate. DNA-dependent RNA polymerase catalyzes the transcription of DNA into RNA using the four ribonucleoside triphosphates as substrates. The protein is DNA-directed RNA polymerase subunit beta of Neorickettsia sennetsu (strain ATCC VR-367 / Miyayama) (Ehrlichia sennetsu).